Here is a 522-residue protein sequence, read N- to C-terminus: Protein GDS1 (522 aa).

Disordered stretches follow at residues 56 to 88 (ALDD…PKKD), 222 to 268 (QQLE…SSNS), 300 to 391 (LSPS…SHNA), and 433 to 489 (STQT…SRNE). The span at 62–73 (LAGSSFSSSQEI) shows a compositional bias: polar residues. Residues 74–88 (KATKPKKDFGAPKKD) show a composition bias toward basic and acidic residues. Polar residues-rich tracts occupy residues 222–236 (QQLE…FNSN), 244–260 (SSNQ…SMTD), 300–314 (LSPS…LLTP), and 355–366 (SQSLSVLSTPKK). The segment covering 368–378 (SSASLSTFASS) has biased composition (low complexity). The segment covering 379–391 (KNISPDSSLSHNA) has biased composition (polar residues). Low complexity predominate over residues 439–467 (ESSSESSQYNSSSSSPVNSAAASSAESLS). The span at 468-489 (DINSSQDNGRESNPSSQESRNE) shows a compositional bias: polar residues.

Involved in nuclear control of mitochondria. The sequence is that of Protein GDS1 (GDS1) from Saccharomyces cerevisiae (strain ATCC 204508 / S288c) (Baker's yeast).